Consider the following 519-residue polypeptide: Ribonuclease Y (519 aa).

A helical membrane pass occupies residues 6–26 (VPFYLLIFLVGIGLGVLTFWA). The KH domain occupies 209-272 (TVCTVTIPNE…HIAKMALTEL (64 aa)). Residues 335-428 (VLDHSLEVSH…CSAADAISAS (94 aa)) form the HD domain.

Belongs to the RNase Y family.

It localises to the cell membrane. Endoribonuclease that initiates mRNA decay. In Protochlamydia amoebophila (strain UWE25), this protein is Ribonuclease Y.